Consider the following 321-residue polypeptide: MAVARHGCPPWGSILGLLVLALAAAAAWDVSFLRCSLGSFCECDFWPDLPGLECDLARHLAGQHLAKALVVKSLKAFVQDPAPSKPLVLSLHGWTGTGKSYVSSLLAQYLFRGGLRSPHVHHFSPIIHFPHPSHTEQYKNELKSWVQGNLTACGRSLFLFDEMDKLPPGLMEVLKPFLGPSWVVYGTNYRKAIFIFISNTGGEQINQVALEAWRSRRDREEISLQEVEPAVSQAVLDNPHHGFWRSGIMEEQLLDAVVPFLPLQRHHVRHCVLNELAQLGLEPREEVVQAVLDSTTYFPEEEQLFSSNGCKTVASRITFFL.

The first 27 residues, 1–27 (MAVARHGCPPWGSILGLLVLALAAAAA), serve as a signal peptide directing secretion. ATP is bound at residue 93-100 (GWTGTGKS). N149 is a glycosylation site (N-linked (GlcNAc...) asparagine).

The protein belongs to the ClpA/ClpB family. Torsin subfamily. As to quaternary structure, homohexamer. Interacts with TOR1AIP1.

Its subcellular location is the endoplasmic reticulum lumen. The polypeptide is Torsin-2A (Tor2a) (Rattus norvegicus (Rat)).